Consider the following 644-residue polypeptide: MVTALSDVNNTDNYGAGQIQVLEGLEAVRKRPGMYIGSTSERGLHHLVWEIVDNSIDEALAGYANKIEVVIEKDNWIKVTDNGRGIPVDIQEKMGRPAVEVILTVLHAGGKFGGGGYKVSGGLHGVGSSVVNALSQDLEVYVHRNETIYHQAYKKGVPQFDLKEVGTTDKTGTVIRFKADGEIFTETTVYNYETLQQRIRELAFLNKGIQITLRDERDEENVREDSYHYEGGIKSYVELLNENKEPIHDEPIYIHQSKDDIEVEIAIQYNSGYATNLLTYANNIHTYEGGTHEDGFKRALTRVLNSYGLSSKIMKEEKDRLSGEDTREGMTAIISIKHGDPQFEGQTKTKLGNSEVRQVVDKLFSEHFERFLYENPQVARTVVEKGIMAARARVAAKKAREVTRRKSALDVASLPGKLADCSSKSPEECEIFLVEGDSAGGSTKSGRDSRTQAILPLRGKILNVEKARLDRILNNNEIRQMITAFGTGIGGDFDLAKARYHKIVIMTDADVDGAHIRTLLLTFFYRFMRPLIEAGYVYIAQPPLYKLTQGKQKYYVYNDRELDKLKSELNPTPKWSIARYKGLGEMNADQLWETTMNPEHRALLQVKLEDAIEADQTFEMLMGDVVENRRQFIEDNAVYANLDF.

The region spanning 429-543 (CEIFLVEGDS…AGYVYIAQPP (115 aa)) is the Toprim domain. Positions 435, 508, and 510 each coordinate Mg(2+).

It belongs to the type II topoisomerase GyrB family. Heterotetramer, composed of two GyrA and two GyrB chains. In the heterotetramer, GyrA contains the active site tyrosine that forms a transient covalent intermediate with DNA, while GyrB binds cofactors and catalyzes ATP hydrolysis. Mg(2+) is required as a cofactor. Mn(2+) serves as cofactor. The cofactor is Ca(2+).

It localises to the cytoplasm. The enzyme catalyses ATP-dependent breakage, passage and rejoining of double-stranded DNA.. In terms of biological role, a type II topoisomerase that negatively supercoils closed circular double-stranded (ds) DNA in an ATP-dependent manner to modulate DNA topology and maintain chromosomes in an underwound state. Negative supercoiling favors strand separation, and DNA replication, transcription, recombination and repair, all of which involve strand separation. Also able to catalyze the interconversion of other topological isomers of dsDNA rings, including catenanes and knotted rings. Type II topoisomerases break and join 2 DNA strands simultaneously in an ATP-dependent manner. This chain is DNA gyrase subunit B, found in Staphylococcus aureus (strain Mu50 / ATCC 700699).